Consider the following 1402-residue polypeptide: DNA-directed RNA polymerase subunit beta' (1402 aa).

Residues C70, C72, C85, and C88 each coordinate Zn(2+). 3 residues coordinate Mg(2+): D460, D462, and D464. Positions 812, 886, 893, and 896 each coordinate Zn(2+). Residues 1373-1402 (DRFLNGSASSNEKSRSAGVLEATDEESAGD) are disordered.

This sequence belongs to the RNA polymerase beta' chain family. The RNAP catalytic core consists of 2 alpha, 1 beta, 1 beta' and 1 omega subunit. When a sigma factor is associated with the core the holoenzyme is formed, which can initiate transcription. The cofactor is Mg(2+). Requires Zn(2+) as cofactor.

The catalysed reaction is RNA(n) + a ribonucleoside 5'-triphosphate = RNA(n+1) + diphosphate. Functionally, DNA-dependent RNA polymerase catalyzes the transcription of DNA into RNA using the four ribonucleoside triphosphates as substrates. This Dichelobacter nodosus (strain VCS1703A) protein is DNA-directed RNA polymerase subunit beta'.